A 294-amino-acid chain; its full sequence is S-adenosylmethionine uptake transporter (294 aa).

10 helical membrane passes run 4 to 24, 41 to 61, 74 to 91, 98 to 118, 121 to 141, 148 to 168, 178 to 198, 207 to 227, 237 to 257, and 260 to 280; these read ALKTYLNGICWFLLSLVTSSI, VAFFRFFFSSIVLLPFVVYYG, VLRGLLLFFGMTSWTYGL, TATVVSFAIPLFTLILAVFIL, NIIWQRWVVTVVGFIGLVVML, FNPEILYLILAAISFAMLDII, MLSMLFYSAIVTAMVSLPVAM, FELALLFVLGSSGSFILFFLL, ATAPYRYLELVISAIAAYFIF, and FPDKSTVHGAVIIIPATLFII. 2 consecutive EamA domains span residues 22 to 141 and 160 to 280; these read SSIN…VVML and ISFA…LFII.

Belongs to the drug/metabolite transporter (DMT) superfamily. 10 TMS drug/metabolite exporter (DME) (TC 2.A.7.3) family.

Its subcellular location is the cell inner membrane. Transport is inhibited by S-adenosylethionine and to a lesser extent by S-adenosylhomocysteine. Unlike eukaryotic transporters is not inhibited by sinfungin. Also inhibited by 2.4-dinitrophenol, suggesting transport is an energy-dependent process. In terms of biological role, transports S-adenosylmethionine. The polypeptide is S-adenosylmethionine uptake transporter (sam) (Rickettsia prowazekii (strain Madrid E)).